The following is a 194-amino-acid chain: Large ribosomal subunit protein uL18 (194 aa).

This sequence belongs to the universal ribosomal protein uL18 family. In terms of assembly, part of the 50S ribosomal subunit. Contacts the 5S and 23S rRNAs.

Its function is as follows. This is one of the proteins that bind and probably mediate the attachment of the 5S RNA into the large ribosomal subunit, where it forms part of the central protuberance. This is Large ribosomal subunit protein uL18 from Methanococcus aeolicus (strain ATCC BAA-1280 / DSM 17508 / OCM 812 / Nankai-3).